The sequence spans 150 residues: 3-hydroxyacyl-[acyl-carrier-protein] dehydratase FabZ (150 aa).

Residue histidine 51 is part of the active site.

The protein belongs to the thioester dehydratase family. FabZ subfamily.

Its subcellular location is the cytoplasm. It catalyses the reaction a (3R)-hydroxyacyl-[ACP] = a (2E)-enoyl-[ACP] + H2O. Functionally, involved in unsaturated fatty acids biosynthesis. Catalyzes the dehydration of short chain beta-hydroxyacyl-ACPs and long chain saturated and unsaturated beta-hydroxyacyl-ACPs. The chain is 3-hydroxyacyl-[acyl-carrier-protein] dehydratase FabZ from Legionella pneumophila subsp. pneumophila (strain Philadelphia 1 / ATCC 33152 / DSM 7513).